Consider the following 47-residue polypeptide: Antimicrobial peptide LCI (47 aa).

It localises to the secreted. Functionally, has antibacterial activity against X.oryzae pv oryzae and R.solanacearum, but not E.coli or P.carotovorum subsp carotovorum. May bind DNA or mRNA. In Bacillus subtilis, this protein is Antimicrobial peptide LCI.